We begin with the raw amino-acid sequence, 266 residues long: Tryptophan synthase alpha chain (266 aa).

Active-site proton acceptor residues include E52 and D63.

The protein belongs to the TrpA family. As to quaternary structure, tetramer of two alpha and two beta chains.

The enzyme catalyses (1S,2R)-1-C-(indol-3-yl)glycerol 3-phosphate + L-serine = D-glyceraldehyde 3-phosphate + L-tryptophan + H2O. It functions in the pathway amino-acid biosynthesis; L-tryptophan biosynthesis; L-tryptophan from chorismate: step 5/5. Functionally, the alpha subunit is responsible for the aldol cleavage of indoleglycerol phosphate to indole and glyceraldehyde 3-phosphate. This Nocardia farcinica (strain IFM 10152) protein is Tryptophan synthase alpha chain.